The following is a 433-amino-acid chain: GTPase Der (433 aa).

2 EngA-type G domains span residues K5–G167 and I174–E349. GTP contacts are provided by residues G11 to S18, D58 to F62, N119 to D122, G180 to S187, D227 to I231, and S292 to D295. Residues E349–I429 form the KH-like domain.

This sequence belongs to the TRAFAC class TrmE-Era-EngA-EngB-Septin-like GTPase superfamily. EngA (Der) GTPase family. Associates with the 50S ribosomal subunit.

Its function is as follows. GTPase that plays an essential role in the late steps of ribosome biogenesis. The chain is GTPase Der from Borreliella burgdorferi (strain ATCC 35210 / DSM 4680 / CIP 102532 / B31) (Borrelia burgdorferi).